A 336-amino-acid chain; its full sequence is Phenylalanine--tRNA ligase alpha subunit (336 aa).

Glu263 serves as a coordination point for Mg(2+).

It belongs to the class-II aminoacyl-tRNA synthetase family. Phe-tRNA synthetase alpha subunit type 1 subfamily. Tetramer of two alpha and two beta subunits. Mg(2+) is required as a cofactor.

Its subcellular location is the cytoplasm. The catalysed reaction is tRNA(Phe) + L-phenylalanine + ATP = L-phenylalanyl-tRNA(Phe) + AMP + diphosphate + H(+). This is Phenylalanine--tRNA ligase alpha subunit from Thermosynechococcus vestitus (strain NIES-2133 / IAM M-273 / BP-1).